Reading from the N-terminus, the 311-residue chain is Homoserine kinase (311 aa).

Residue 88–98 (PEGLGLGSSGA) coordinates ATP.

This sequence belongs to the GHMP kinase family. Homoserine kinase subfamily.

The protein resides in the cytoplasm. It carries out the reaction L-homoserine + ATP = O-phospho-L-homoserine + ADP + H(+). It functions in the pathway amino-acid biosynthesis; L-threonine biosynthesis; L-threonine from L-aspartate: step 4/5. Its function is as follows. Catalyzes the ATP-dependent phosphorylation of L-homoserine to L-homoserine phosphate. This chain is Homoserine kinase, found in Saccharolobus solfataricus (strain ATCC 35092 / DSM 1617 / JCM 11322 / P2) (Sulfolobus solfataricus).